We begin with the raw amino-acid sequence, 81 residues long: uncharacterized protein (81 aa).

This is an uncharacterized protein from Acidianus bottle-shaped virus (isolate Italy/Pozzuoli) (ABV).